Here is a 389-residue protein sequence, read N- to C-terminus: LL-diaminopimelate aminotransferase (389 aa).

Tyrosine 16 and glycine 41 together coordinate substrate. Pyridoxal 5'-phosphate is bound by residues tyrosine 70, 104–105 (SK), tyrosine 129, asparagine 179, tyrosine 210, and 239–241 (SLS). Residues lysine 105, tyrosine 129, and asparagine 179 each coordinate substrate. An N6-(pyridoxal phosphate)lysine modification is found at lysine 242. Arginine 250 serves as a coordination point for pyridoxal 5'-phosphate. Position 369 (arginine 369) interacts with substrate.

Belongs to the class-I pyridoxal-phosphate-dependent aminotransferase family. LL-diaminopimelate aminotransferase subfamily. In terms of assembly, homodimer. It depends on pyridoxal 5'-phosphate as a cofactor.

It catalyses the reaction (2S,6S)-2,6-diaminopimelate + 2-oxoglutarate = (S)-2,3,4,5-tetrahydrodipicolinate + L-glutamate + H2O + H(+). It functions in the pathway amino-acid biosynthesis; L-lysine biosynthesis via DAP pathway; LL-2,6-diaminopimelate from (S)-tetrahydrodipicolinate (aminotransferase route): step 1/1. Functionally, involved in the synthesis of meso-diaminopimelate (m-DAP or DL-DAP), required for both lysine and peptidoglycan biosynthesis. Catalyzes the direct conversion of tetrahydrodipicolinate to LL-diaminopimelate. This chain is LL-diaminopimelate aminotransferase, found in Nitratidesulfovibrio vulgaris (strain DSM 19637 / Miyazaki F) (Desulfovibrio vulgaris).